Consider the following 163-residue polypeptide: MSTSQPDDSNNRIVAVTLDEESIGRSGPDIEHERAIAIYDLVEKNLFAPEGAGDGPFTLHIGITGSRLMFDIRREDGAPVITHLLSLSPFRRIVKDYFMICDSYYQAIRTATPDKIEAIDMGRRGIHDEGSRTLQERLSGKVRIDFETARRLFTLISVLHWKG.

This sequence belongs to the UPF0262 family.

In Rhodopseudomonas palustris (strain BisB5), this protein is UPF0262 protein RPD_4278.